Here is a 118-residue protein sequence, read N- to C-terminus: Large ribosomal subunit protein uL18 (118 aa).

The protein belongs to the universal ribosomal protein uL18 family. In terms of assembly, part of the 50S ribosomal subunit; part of the 5S rRNA/L5/L18/L25 subcomplex. Contacts the 5S and 23S rRNAs.

This is one of the proteins that bind and probably mediate the attachment of the 5S RNA into the large ribosomal subunit, where it forms part of the central protuberance. The polypeptide is Large ribosomal subunit protein uL18 (Wolinella succinogenes (strain ATCC 29543 / DSM 1740 / CCUG 13145 / JCM 31913 / LMG 7466 / NCTC 11488 / FDC 602W) (Vibrio succinogenes)).